Consider the following 155-residue polypeptide: SsrA-binding protein (155 aa).

The protein belongs to the SmpB family.

It is found in the cytoplasm. Its function is as follows. Required for rescue of stalled ribosomes mediated by trans-translation. Binds to transfer-messenger RNA (tmRNA), required for stable association of tmRNA with ribosomes. tmRNA and SmpB together mimic tRNA shape, replacing the anticodon stem-loop with SmpB. tmRNA is encoded by the ssrA gene; the 2 termini fold to resemble tRNA(Ala) and it encodes a 'tag peptide', a short internal open reading frame. During trans-translation Ala-aminoacylated tmRNA acts like a tRNA, entering the A-site of stalled ribosomes, displacing the stalled mRNA. The ribosome then switches to translate the ORF on the tmRNA; the nascent peptide is terminated with the 'tag peptide' encoded by the tmRNA and targeted for degradation. The ribosome is freed to recommence translation, which seems to be the essential function of trans-translation. This Bacillus cereus (strain 03BB102) protein is SsrA-binding protein.